Reading from the N-terminus, the 61-residue chain is Large ribosomal subunit protein eL37 (61 aa).

4 residues coordinate Zn(2+): cysteine 19, cysteine 22, cysteine 34, and cysteine 37. A C4-type zinc finger spans residues 19 to 37; the sequence is CRRCGRNAYNVSKHYCAAC.

This sequence belongs to the eukaryotic ribosomal protein eL37 family. The cofactor is Zn(2+).

In terms of biological role, binds to the 23S rRNA. The chain is Large ribosomal subunit protein eL37 from Saccharolobus islandicus (strain Y.N.15.51 / Yellowstone #2) (Sulfolobus islandicus).